The chain runs to 488 residues: Mannosylglycerate hydrolase MGH1 (488 aa).

Substrate is bound by residues tyrosine 94, 98–101, tyrosine 146, glutamine 167, and glycine 227; that span reads WNWD. The active-site Proton donor is aspartate 229. Substrate-binding positions include arginine 262 and 415–416; that span reads YW. Glutamate 459 serves as the catalytic Proton acceptor.

It belongs to the glycosyl hydrolase 63 family.

It carries out the reaction (2R)-2-O-(alpha-D-mannosyl)-glycerate + H2O = D-mannose + (R)-glycerate. The catalysed reaction is (2R)-2-O-(alpha-D-glucopyranosyl)-glycerate + H2O = (R)-glycerate + D-glucose. Activity is not dependent on divalent cations, but it is enhanced by Mn(2+). Its function is as follows. Catalyzes the hydrolysis of alpha-D-mannosyl-glycerate (MG) to D-glycerate and D-mannose. Can also hydrolyze alpha-D-glucopyranosyl-glycerate (GG)with lower efficiency. This Selaginella moellendorffii (Spikemoss) protein is Mannosylglycerate hydrolase MGH1.